Reading from the N-terminus, the 463-residue chain is Phytase A (463 aa).

The signal sequence occupies residues 1-19; the sequence is MAFFTVALSLYYLLSRVST. N-linked (GlcNAc...) asparagine glycosylation is present at asparagine 26. The cysteines at positions 29 and 38 are disulfide-linked. Residue asparagine 41 is glycosylated (N-linked (GlcNAc...) asparagine). 1D-myo-inositol hexakisphosphate contacts are provided by glutamine 48, tyrosine 49, arginine 79, histidine 80, arginine 83, and threonine 86. 4 cysteine pairs are disulfide-bonded: cysteine 69/cysteine 410, cysteine 211/cysteine 460, cysteine 260/cysteine 278, and cysteine 431/cysteine 439. Histidine 80 acts as the Nucleophile in catalysis. 2 N-linked (GlcNAc...) asparagine glycosylation sites follow: asparagine 103 and asparagine 118. Arginine 163 is a 1D-myo-inositol hexakisphosphate binding site. N-linked (GlcNAc...) asparagine glycosylation occurs at asparagine 203. 1D-myo-inositol hexakisphosphate is bound at residue aspartate 207. Residue asparagine 226 is glycosylated (N-linked (GlcNAc...) asparagine). Position 297 (lysine 297) interacts with 1D-myo-inositol hexakisphosphate. 2 N-linked (GlcNAc...) asparagine glycosylation sites follow: asparagine 331 and asparagine 335. The 1D-myo-inositol hexakisphosphate site is built by histidine 357 and aspartate 358. N-linked (GlcNAc...) asparagine glycosylation is present at asparagine 372.

Belongs to the histidine acid phosphatase family. Monomer. In terms of processing, seems to be cleaved into at least two pieces, most likely due to proteases in the supernatant. The N-terminal fragment, called phyB seems to retain phytase activity.

Its subcellular location is the secreted. It carries out the reaction 1D-myo-inositol hexakisphosphate + H2O = 1D-myo-inositol 1,2,4,5,6-pentakisphosphate + phosphate. The catalysed reaction is 1D-myo-inositol 1,2,4,5,6-pentakisphosphate + H2O = 1D-myo-inositol 1,2,5,6-tetrakisphosphate + phosphate. It catalyses the reaction 1D-myo-inositol 1,2,5,6-tetrakisphosphate + H2O = 1D-myo-inositol 1,2,6-trisphosphate + phosphate. The enzyme catalyses 1D-myo-inositol 1,2,6-trisphosphate + H2O = 1D-myo-inositol 1,2-bisphosphate + phosphate. It carries out the reaction 1D-myo-inositol 1,2-bisphosphate + H2O = 1D-myo-inositol 2-phosphate + phosphate. Its function is as follows. Catalyzes the phosphate monoester hydrolysis of phytic acid (myo-inositol hexakisphosphate), which results in the stepwise formation of myo-inositol pentakis-, tetrakis-, tris-, bis-, and monophosphates, as well as the liberation of inorganic phosphate. Myo-inositol 2-monophosphate is the end product. Has a broad substrate specificity and is also able to dephosphorylate other classic acid phosphatase substrates such as p-nitrophenyl phosphate, phenyl phosphate, fructose 1,6-bisphosphate, fructose 6-phosphate, glucose 6-phosphate, ribose 5-phosphate, alpha-glycerophosphate, beta-glycerophosphate, 3-phosphoglycerate, as well as ADP and ATP. The protein is Phytase A of Emericella nidulans (strain FGSC A4 / ATCC 38163 / CBS 112.46 / NRRL 194 / M139) (Aspergillus nidulans).